A 201-amino-acid polypeptide reads, in one-letter code: Small ribosomal subunit protein uS4 (201 aa).

The disordered stretch occupies residues Met-1 to Lys-42. Residues Ser-91–Ala-157 form the S4 RNA-binding domain.

This sequence belongs to the universal ribosomal protein uS4 family. As to quaternary structure, part of the 30S ribosomal subunit. Contacts protein S5. The interaction surface between S4 and S5 is involved in control of translational fidelity.

Its function is as follows. One of the primary rRNA binding proteins, it binds directly to 16S rRNA where it nucleates assembly of the body of the 30S subunit. With S5 and S12 plays an important role in translational accuracy. In Mycobacterium ulcerans (strain Agy99), this protein is Small ribosomal subunit protein uS4.